A 128-amino-acid polypeptide reads, in one-letter code: Small ribosomal subunit protein uS13 (128 aa).

Positions 98–128 (VRGQRTRTNARTRKGPRPRIGVKKKGKQAGS) are disordered. The segment covering 101–128 (QRTRTNARTRKGPRPRIGVKKKGKQAGS) has biased composition (basic residues).

Belongs to the universal ribosomal protein uS13 family. As to quaternary structure, part of the 30S ribosomal subunit. Forms a loose heterodimer with protein S19. Forms two bridges to the 50S subunit in the 70S ribosome.

Located at the top of the head of the 30S subunit, it contacts several helices of the 16S rRNA. In the 70S ribosome it contacts the 23S rRNA (bridge B1a) and protein L5 of the 50S subunit (bridge B1b), connecting the 2 subunits; these bridges are implicated in subunit movement. Contacts the tRNAs in the A and P-sites. This is Small ribosomal subunit protein uS13 from Thermomicrobium roseum (strain ATCC 27502 / DSM 5159 / P-2).